A 465-amino-acid chain; its full sequence is Sorting nexin-8 (465 aa).

A compositionally biased stretch (low complexity) spans 1–19; the sequence is MTGRAMDPLPAAAVGAAAE. A disordered region spans residues 1 to 36; it reads MTGRAMDPLPAAAVGAAAEAEADEEADPPASDLPTP. A PX domain is found at 73-181; sequence ARDTVQVELI…KLFLSFSGSD (109 aa). A 1,2-diacyl-sn-glycero-3-phospho-(1D-myo-inositol-3-phosphate)-binding residues include R109, K135, and R148. T452 is subject to Phosphothreonine. S456 carries the phosphoserine modification.

The protein belongs to the sorting nexin family.

Its subcellular location is the early endosome membrane. Functionally, may be involved in several stages of intracellular trafficking. May play a role in intracellular protein transport from early endosomes to the trans-Golgi network. This chain is Sorting nexin-8 (SNX8), found in Homo sapiens (Human).